We begin with the raw amino-acid sequence, 208 residues long: uncharacterized protein (208 aa).

Transmembrane regions (helical) follow at residues 5–25 (VIGI…KEAW), 41–61 (MLLI…IAAL), 69–89 (ANGI…LFFL), 123–143 (VLLG…ICGL), 150–170 (VFFF…TIAG), and 176–196 (NKLL…LVIY).

Its subcellular location is the cell membrane. This is an uncharacterized protein from Bacillus subtilis (strain 168).